The primary structure comprises 100 residues: Protein RnfH (100 aa).

This sequence belongs to the UPF0125 (RnfH) family.

The protein is Protein RnfH of Actinobacillus succinogenes (strain ATCC 55618 / DSM 22257 / CCUG 43843 / 130Z).